Consider the following 421-residue polypeptide: UDP-N-acetylglucosamine 1-carboxyvinyltransferase (421 aa).

22 to 23 (KN) is a phosphoenolpyruvate binding site. Residue R91 coordinates UDP-N-acetyl-alpha-D-glucosamine. Residue C115 is the Proton donor of the active site. C115 is subject to 2-(S-cysteinyl)pyruvic acid O-phosphothioketal. UDP-N-acetyl-alpha-D-glucosamine is bound by residues 120–124 (RPVDL), 160–163 (KVSV), D305, and I327.

This sequence belongs to the EPSP synthase family. MurA subfamily.

Its subcellular location is the cytoplasm. It carries out the reaction phosphoenolpyruvate + UDP-N-acetyl-alpha-D-glucosamine = UDP-N-acetyl-3-O-(1-carboxyvinyl)-alpha-D-glucosamine + phosphate. It functions in the pathway cell wall biogenesis; peptidoglycan biosynthesis. Cell wall formation. Adds enolpyruvyl to UDP-N-acetylglucosamine. The protein is UDP-N-acetylglucosamine 1-carboxyvinyltransferase of Photorhabdus laumondii subsp. laumondii (strain DSM 15139 / CIP 105565 / TT01) (Photorhabdus luminescens subsp. laumondii).